Consider the following 360-residue polypeptide: Molybdenum import ATP-binding protein ModC (360 aa).

The 230-residue stretch at 5-234 folds into the ABC transporter domain; it reads VKLHLGYQDF…LDLPLALGDD (230 aa). 32 to 39 serves as a coordination point for ATP; the sequence is GHSGSGKT. A Mop domain is found at 295–360; sequence HSSILNRLPV…AQIKAVAVLA (66 aa).

This sequence belongs to the ABC transporter superfamily. Molybdate importer (TC 3.A.1.8) family. As to quaternary structure, the complex is composed of two ATP-binding proteins (ModC), two transmembrane proteins (ModB) and a solute-binding protein (ModA).

It is found in the cell inner membrane. The enzyme catalyses molybdate(out) + ATP + H2O = molybdate(in) + ADP + phosphate + H(+). Part of the ABC transporter complex ModABC involved in molybdenum import. Responsible for energy coupling to the transport system. The polypeptide is Molybdenum import ATP-binding protein ModC (Pseudomonas fluorescens (strain ATCC BAA-477 / NRRL B-23932 / Pf-5)).